A 305-amino-acid chain; its full sequence is DNA-directed RNA polymerase 35 kDa subunit (305 aa).

The protein belongs to the poxviridae DNA-directed RNA polymerase 35 kDa subunit family. The DNA-dependent RNA polymerase used for intermediate and late genes expression consists of eight subunits 147 kDa, 133 kDa, 35 kDa, 30 kDa, 22 kDa, 19 kDa, 18 kDa and 7 kDa totalling more than 500 kDa in mass. The same holoenzyme, with the addition of the transcription-specificity factor RAP94, is used for early gene expression.

The protein localises to the virion. It catalyses the reaction RNA(n) + a ribonucleoside 5'-triphosphate = RNA(n+1) + diphosphate. In terms of biological role, part of the DNA-dependent RNA polymerase which catalyzes the transcription of viral DNA into RNA using the four ribonucleoside triphosphates as substrates. Responsible for the transcription of early, intermediate and late genes. DNA-dependent RNA polymerase associates with the early transcription factor (ETF), itself composed of D6 and A7, thereby allowing the early genes transcription. Late transcription, and probably also intermediate transcription, require newly synthesized RNA polymerase. This Homo sapiens (Human) protein is DNA-directed RNA polymerase 35 kDa subunit (RPO35).